A 180-amino-acid chain; its full sequence is Large ribosomal subunit protein uL6 (180 aa).

This sequence belongs to the universal ribosomal protein uL6 family. Part of the 50S ribosomal subunit.

This protein binds to the 23S rRNA, and is important in its secondary structure. It is located near the subunit interface in the base of the L7/L12 stalk, and near the tRNA binding site of the peptidyltransferase center. The protein is Large ribosomal subunit protein uL6 of Mycoplasma capricolum subsp. capricolum (strain California kid / ATCC 27343 / NCTC 10154).